The sequence spans 243 residues: Segregation and condensation protein A (243 aa).

Belongs to the ScpA family. In terms of assembly, component of a cohesin-like complex composed of ScpA, ScpB and the Smc homodimer, in which ScpA and ScpB bind to the head domain of Smc. The presence of the three proteins is required for the association of the complex with DNA.

It is found in the cytoplasm. Participates in chromosomal partition during cell division. May act via the formation of a condensin-like complex containing Smc and ScpB that pull DNA away from mid-cell into both cell halves. The polypeptide is Segregation and condensation protein A (Staphylococcus haemolyticus (strain JCSC1435)).